Consider the following 1257-residue polypeptide: Putative structural protein ORF146 (1257 aa).

The protein belongs to the ascovirus HvAV ORF146 family.

The protein localises to the virion. The protein is Putative structural protein ORF146 of Noctuidae (owlet moths).